The primary structure comprises 383 residues: Succinyl-diaminopimelate desuccinylase (383 aa).

His-72 contacts Zn(2+). Asp-74 is an active-site residue. Asp-105 serves as a coordination point for Zn(2+). Glu-139 acts as the Proton acceptor in catalysis. Residues Glu-140, Glu-168, and His-356 each contribute to the Zn(2+) site.

Belongs to the peptidase M20A family. DapE subfamily. In terms of assembly, homodimer. Zn(2+) serves as cofactor. It depends on Co(2+) as a cofactor.

The catalysed reaction is N-succinyl-(2S,6S)-2,6-diaminopimelate + H2O = (2S,6S)-2,6-diaminopimelate + succinate. It functions in the pathway amino-acid biosynthesis; L-lysine biosynthesis via DAP pathway; LL-2,6-diaminopimelate from (S)-tetrahydrodipicolinate (succinylase route): step 3/3. Its function is as follows. Catalyzes the hydrolysis of N-succinyl-L,L-diaminopimelic acid (SDAP), forming succinate and LL-2,6-diaminopimelate (DAP), an intermediate involved in the bacterial biosynthesis of lysine and meso-diaminopimelic acid, an essential component of bacterial cell walls. This is Succinyl-diaminopimelate desuccinylase from Beijerinckia indica subsp. indica (strain ATCC 9039 / DSM 1715 / NCIMB 8712).